A 341-amino-acid polypeptide reads, in one-letter code: Elongation factor Ts (341 aa).

The involved in Mg(2+) ion dislocation from EF-Tu stretch occupies residues 80–83 (TDFV).

Belongs to the EF-Ts family.

The protein resides in the cytoplasm. Functionally, associates with the EF-Tu.GDP complex and induces the exchange of GDP to GTP. It remains bound to the aminoacyl-tRNA.EF-Tu.GTP complex up to the GTP hydrolysis stage on the ribosome. The protein is Elongation factor Ts of Lactobacillus johnsonii (strain CNCM I-12250 / La1 / NCC 533).